The chain runs to 291 residues: MKVGVEAIRELRQITGAGLGDCKEALETCSGDMEKAKVYLREKGLSKAYKKSHRDAADGLVAVRVEGDKGAILKLGSETDFVARNEKFRSLAAELVSSLLKHGAEDLSSFSASPYDGGSGVSVADEVVNAAAVLGEHIVLSGIGFLELGGPGVIGSYIHGAVGEGIGRAGALVALEATTAKTEALLEFARQLAMHIVAAKPESVSVETLSNDIVEREREIVAKQVEALGKPESVASKIVDGRMQKFFEDMVLLEQTFIMDGSTKIRDLLHNKGQDLGCEVRIVAYRLFSVG.

An involved in Mg(2+) ion dislocation from EF-Tu region spans residues 79–82 (TDFV).

The protein belongs to the EF-Ts family.

It localises to the cytoplasm. Its function is as follows. Associates with the EF-Tu.GDP complex and induces the exchange of GDP to GTP. It remains bound to the aminoacyl-tRNA.EF-Tu.GTP complex up to the GTP hydrolysis stage on the ribosome. The chain is Elongation factor Ts from Anaplasma marginale (strain Florida).